Consider the following 141-residue polypeptide: Large ribosomal subunit protein uL22 (141 aa).

A disordered region spans residues glutamate 110–serine 141. The segment covering lysine 117 to lysine 134 has biased composition (low complexity).

This sequence belongs to the universal ribosomal protein uL22 family. In terms of assembly, part of the 50S ribosomal subunit.

In terms of biological role, this protein binds specifically to 23S rRNA; its binding is stimulated by other ribosomal proteins, e.g. L4, L17, and L20. It is important during the early stages of 50S assembly. It makes multiple contacts with different domains of the 23S rRNA in the assembled 50S subunit and ribosome. Functionally, the globular domain of the protein is located near the polypeptide exit tunnel on the outside of the subunit, while an extended beta-hairpin is found that lines the wall of the exit tunnel in the center of the 70S ribosome. The chain is Large ribosomal subunit protein uL22 from Campylobacter jejuni subsp. doylei (strain ATCC BAA-1458 / RM4099 / 269.97).